Here is a 435-residue protein sequence, read N- to C-terminus: Casein kinase 1-like protein 12 (435 aa).

Positions 9 to 278 constitute a Protein kinase domain; sequence YRLGRKIGSG…LKRIFRDLFI (270 aa). ATP is bound by residues 15 to 23 and K38; that span reads IGSGSFGEI. Catalysis depends on D128, which acts as the Proton acceptor. Disordered stretches follow at residues 313-363 and 394-414; these read VGTS…RGPM and LRNS…TRKH.

This sequence belongs to the protein kinase superfamily. CK1 Ser/Thr protein kinase family. Casein kinase I subfamily. In terms of assembly, monomer. Post-translationally, autophosphorylated.

It is found in the cytoplasm. It carries out the reaction L-seryl-[protein] + ATP = O-phospho-L-seryl-[protein] + ADP + H(+). The catalysed reaction is L-threonyl-[protein] + ATP = O-phospho-L-threonyl-[protein] + ADP + H(+). Its function is as follows. Casein kinases are operationally defined by their preferential utilization of acidic proteins such as caseins as substrates. It can phosphorylate a large number of proteins. The sequence is that of Casein kinase 1-like protein 12 from Arabidopsis thaliana (Mouse-ear cress).